The chain runs to 215 residues: Pyrrolidone-carboxylate peptidase (215 aa).

Catalysis depends on residues Glu-80, Cys-143, and His-167.

Belongs to the peptidase C15 family. In terms of assembly, homotetramer.

It localises to the cytoplasm. The enzyme catalyses Release of an N-terminal pyroglutamyl group from a polypeptide, the second amino acid generally not being Pro.. Its function is as follows. Removes 5-oxoproline from various penultimate amino acid residues except L-proline. The polypeptide is Pyrrolidone-carboxylate peptidase (Bacillus cereus (strain ATCC 14579 / DSM 31 / CCUG 7414 / JCM 2152 / NBRC 15305 / NCIMB 9373 / NCTC 2599 / NRRL B-3711)).